A 458-amino-acid chain; its full sequence is Zinc finger protein 239 (458 aa).

A Glycyl lysine isopeptide (Lys-Gly) (interchain with G-Cter in SUMO2) cross-link involves residue K108. S191 is modified (phosphoserine). 9 C2H2-type zinc fingers span residues Y207–H229, Y235–H257, Y263–H285, Y291–H313, Y319–H341, Y347–H369, Y375–H397, Y403–H425, and Y431–H453.

Belongs to the krueppel C2H2-type zinc-finger protein family.

It is found in the nucleus. In terms of biological role, may be involved in transcriptional regulation. This Pongo abelii (Sumatran orangutan) protein is Zinc finger protein 239 (ZNF239).